The sequence spans 87 residues: Mu-theraphotoxin-Cg1a (87 aa).

The first 21 residues, 1 to 21 (MKVLVLITLAVLGAMFVWTSA), serve as a signal peptide directing secretion. Positions 22–50 (AELEERGSDQRDSPAWVKSMERIFQSEER) are excised as a propeptide. 3 cysteine pairs are disulfide-bonded: Cys-52–Cys-66, Cys-59–Cys-71, and Cys-65–Cys-79.

It belongs to the neurotoxin 10 (Hwtx-1) family. 39 (Jztx-34) subfamily. As to expression, expressed by the venom gland.

The protein resides in the secreted. In terms of biological role, potent and selective inhibitor of hNav1.7/SCN9A (IC(50)=610 nM). Also shows a weak activity towards Nav1.3/SCN3A (IC(50)=7950 nM). In addition, inhibits voltage-gated potassium channels (Kv) in rat DRG neurons. It does not alter the voltage dependence of activation, but it causes a small hyperpolarizing shift in the steady-state inactivations of Nav1.7/SNC9A. Chimera experiments show that the toxin binds to the DIIS3-S4 linker (site 4) of Nav1.7/SCN9A, whereas Nav1.7/SCN9A Asp-827 residue is shown by substitution experiments to be critical for its sensitivity. The toxin traps the domain II voltage sensor in the closed configuration, and not in an outward position. In vivo, shows analgesic activity in three rodent pain models (formalin-induced, acid-induced, and thermal). The protein is Mu-theraphotoxin-Cg1a of Chilobrachys guangxiensis (Chinese earth tiger tarantula).